Here is an 867-residue protein sequence, read N- to C-terminus: Leucine--tRNA ligase (867 aa).

The 'HIGH' region signature appears at 42–52 (PYPSGNLHMGH). Residues 625 to 629 (KMSKS) carry the 'KMSKS' region motif. Lys-628 is a binding site for ATP.

Belongs to the class-I aminoacyl-tRNA synthetase family.

The protein resides in the cytoplasm. It catalyses the reaction tRNA(Leu) + L-leucine + ATP = L-leucyl-tRNA(Leu) + AMP + diphosphate. The sequence is that of Leucine--tRNA ligase from Blochmanniella floridana.